A 261-amino-acid chain; its full sequence is High-affinity zinc uptake system membrane protein ZnuB (261 aa).

Transmembrane regions (helical) follow at residues 8–28, 54–74, 84–104, 125–145, 171–191, 214–234, and 236–256; these read ALLTGIVLSLITAPLGVFVVW, VNPYIAIVVLTLILAIAMVWL, TLLGIIAHSCLSLGVVTVGLL, TDLIYIGIGVIIVLSTLIYFW, ILMILTALTIALSMKFVGALI, VGWAIIMSMLSIIGGLILSAF, and DTAAGPSVVICSAFLFVLSLF.

This sequence belongs to the ABC-3 integral membrane protein family.

It localises to the cell inner membrane. Functionally, involved in the high-affinity zinc uptake transport system. This is High-affinity zinc uptake system membrane protein ZnuB (znuB) from Haemophilus influenzae (strain ATCC 51907 / DSM 11121 / KW20 / Rd).